A 180-amino-acid chain; its full sequence is O-acetyl-ADP-ribose deacetylase (180 aa).

Residues 1–175 (MKPQIEVVVG…LYQRLLIQRG (175 aa)) form the Macro domain. Substrate is bound by residues 11–12 (DI), Asn25, 33–35 (GVD), and 122–126 (STGVY). Asp35 (proton acceptor) is an active-site residue.

It belongs to the MacroD-type family. YmdB subfamily. In terms of assembly, homodimer. Interacts with RNase III.

The enzyme catalyses 3''-O-acetyl-ADP-D-ribose + H2O = ADP-D-ribose + acetate + H(+). It catalyses the reaction 2''-O-acetyl-ADP-D-ribose + H2O = ADP-D-ribose + acetate + H(+). Functionally, deacetylates O-acetyl-ADP ribose to yield ADP-ribose and free acetate. Down-regulates ribonuclease 3 (RNase III) activity. Acts by interacting directly with the region of the ribonuclease that is required for dimerization/activation. The polypeptide is O-acetyl-ADP-ribose deacetylase (Enterobacter sp. (strain 638)).